A 212-amino-acid polypeptide reads, in one-letter code: Thymidylate kinase (212 aa).

An ATP-binding site is contributed by 10–17 (GLEGAGKT).

The protein belongs to the thymidylate kinase family.

It catalyses the reaction dTMP + ATP = dTDP + ADP. Functionally, phosphorylation of dTMP to form dTDP in both de novo and salvage pathways of dTTP synthesis. The sequence is that of Thymidylate kinase from Baumannia cicadellinicola subsp. Homalodisca coagulata.